We begin with the raw amino-acid sequence, 201 residues long: Glycerol-3-phosphate acyltransferase (201 aa).

A run of 5 helical transmembrane segments spans residues 9 to 29 (LTLIGALVFGYFLGSIPFGLI), 60 to 80 (LAAATLIFDMLKGTVAVLVAS), 86 to 106 (AAIGAGFGAFIGHLFPVWIGF), 116 to 136 (LGVLIGLAWPGALVFAAVWIV), and 153 to 173 (IVVPIALYSRGYPAIAVLFAI).

It belongs to the PlsY family. In terms of assembly, probably interacts with PlsX.

Its subcellular location is the cell inner membrane. It carries out the reaction an acyl phosphate + sn-glycerol 3-phosphate = a 1-acyl-sn-glycero-3-phosphate + phosphate. The protein operates within lipid metabolism; phospholipid metabolism. In terms of biological role, catalyzes the transfer of an acyl group from acyl-phosphate (acyl-PO(4)) to glycerol-3-phosphate (G3P) to form lysophosphatidic acid (LPA). This enzyme utilizes acyl-phosphate as fatty acyl donor, but not acyl-CoA or acyl-ACP. In Brucella anthropi (strain ATCC 49188 / DSM 6882 / CCUG 24695 / JCM 21032 / LMG 3331 / NBRC 15819 / NCTC 12168 / Alc 37) (Ochrobactrum anthropi), this protein is Glycerol-3-phosphate acyltransferase.